Reading from the N-terminus, the 280-residue chain is 2,3,4,5-tetrahydropyridine-2,6-dicarboxylate N-succinyltransferase (280 aa).

Substrate is bound by residues Arg107 and Asp144.

The protein belongs to the transferase hexapeptide repeat family. In terms of assembly, homotrimer.

Its subcellular location is the cytoplasm. The enzyme catalyses (S)-2,3,4,5-tetrahydrodipicolinate + succinyl-CoA + H2O = (S)-2-succinylamino-6-oxoheptanedioate + CoA. It functions in the pathway amino-acid biosynthesis; L-lysine biosynthesis via DAP pathway; LL-2,6-diaminopimelate from (S)-tetrahydrodipicolinate (succinylase route): step 1/3. This chain is 2,3,4,5-tetrahydropyridine-2,6-dicarboxylate N-succinyltransferase, found in Granulibacter bethesdensis (strain ATCC BAA-1260 / CGDNIH1).